The following is a 219-amino-acid chain: Glutathione S-transferase-like protein LUC7 (219 aa).

The GST N-terminal domain maps to 3–84; that stretch reads PFGRLYSFMP…YLAQSGPYSE (82 aa). The GST C-terminal domain occupies 90–219; it reads DAATSAKIRQ…NLIDVKRVHE (130 aa).

The protein belongs to the GST superfamily.

Functionally, glutathione S-transferase-like protein; part of the gene cluster that mediates the biosynthesis of the mycotoxin lucilactaene and the lucilactaene-related compound NG-391 that act as cell cycle inhibitors with potent growth inhibitory activity against malarial parasites, moderate growth inhibitory activity against cancer cells, and no activity against bacteria and fungi. Within the cluster, LUC7 and LUC8 encode proteins which are not commonly involved in the biosynthesis of secondary metabolites and are not essential for lucilactaene biosynthesis. The chain is Glutathione S-transferase-like protein LUC7 from Fusarium sp.